The chain runs to 250 residues: Small ribosomal subunit protein uS2 (250 aa).

This sequence belongs to the universal ribosomal protein uS2 family.

This chain is Small ribosomal subunit protein uS2, found in Paracidovorax citrulli (strain AAC00-1) (Acidovorax citrulli).